Here is a 325-residue protein sequence, read N- to C-terminus: Heat-inducible transcription repressor HrcA (325 aa).

It belongs to the HrcA family.

In terms of biological role, negative regulator of class I heat shock genes (grpE-dnaK-dnaJ and groELS operons). Prevents heat-shock induction of these operons. The polypeptide is Heat-inducible transcription repressor HrcA (Staphylococcus aureus (strain JH1)).